The chain runs to 489 residues: Tyrosine-protein phosphatase MSG5 (489 aa).

Basic and acidic residues predominate over residues 1-18 (MQFHSDKQHLDSKTDIDF). The segment at 1 to 30 (MQFHSDKQHLDSKTDIDFKPNSPRSLQNRN) is disordered. Residues serine 22, serine 98, and serine 151 each carry the phosphoserine modification. A Phosphothreonine modification is found at threonine 178. Positions 233–375 (GPLLVLPPNL…LMEWGTMLSK (143 aa)) constitute a Tyrosine-protein phosphatase domain. Cysteine 319 (phosphocysteine intermediate) is an active-site residue. 2 disordered regions span residues 375-401 (KNSPGEEGETVHMPEEDDIGNNEVSST) and 419-489 (LSSS…MFLP). A compositionally biased stretch (low complexity) spans 419–450 (LSSSPNDSSVNSSEVTPRTPATLTGARTALAT). Positions 451–460 (ERGEDDEHCK) are enriched in basic and acidic residues.

It belongs to the protein-tyrosine phosphatase family. Non-receptor class dual specificity subfamily.

It catalyses the reaction O-phospho-L-tyrosyl-[protein] + H2O = L-tyrosyl-[protein] + phosphate. Its function is as follows. Dual specificity phosphatase that dephosphorylates MAP kinase FUS3 on both a Tyr and a Ser or Thr. Has a role in adaptation to pheromone. The protein is Tyrosine-protein phosphatase MSG5 (MSG5) of Saccharomyces cerevisiae (strain ATCC 204508 / S288c) (Baker's yeast).